A 964-amino-acid polypeptide reads, in one-letter code: Protein translocase subunit SecA (964 aa).

Residues Gln-86, 104–108 (GEGKT), and Asp-494 each bind ATP. The interval 848 to 964 (AESADTIAVA…YKMCHGQNEK (117 aa)) is disordered. Residues 871–882 (AEGEVEEEDEDT) are compositionally biased toward acidic residues. The span at 889-900 (AESAAASGAGES) shows a compositional bias: low complexity. Residues Cys-947, Cys-949, Cys-958, and His-959 each contribute to the Zn(2+) site.

The protein belongs to the SecA family. Monomer and homodimer. Part of the essential Sec protein translocation apparatus which comprises SecA, SecYEG and auxiliary proteins SecDF. Other proteins may also be involved. The cofactor is Zn(2+).

The protein resides in the cell membrane. It is found in the cytoplasm. It catalyses the reaction ATP + H2O + cellular proteinSide 1 = ADP + phosphate + cellular proteinSide 2.. In terms of biological role, part of the Sec protein translocase complex. Interacts with the SecYEG preprotein conducting channel. Has a central role in coupling the hydrolysis of ATP to the transfer of proteins into and across the cell membrane, serving as an ATP-driven molecular motor driving the stepwise translocation of polypeptide chains across the membrane. The polypeptide is Protein translocase subunit SecA (Bifidobacterium longum (strain NCC 2705)).